The chain runs to 396 residues: Ribosomal RNA large subunit methyltransferase I (396 aa).

A PUA domain is found at 2-81 (SVRLVLAKGR…ESIDIAFFSR (80 aa)).

It belongs to the methyltransferase superfamily. RlmI family.

The protein resides in the cytoplasm. The enzyme catalyses cytidine(1962) in 23S rRNA + S-adenosyl-L-methionine = 5-methylcytidine(1962) in 23S rRNA + S-adenosyl-L-homocysteine + H(+). Functionally, specifically methylates the cytosine at position 1962 (m5C1962) of 23S rRNA. The chain is Ribosomal RNA large subunit methyltransferase I from Shigella boydii serotype 4 (strain Sb227).